We begin with the raw amino-acid sequence, 300 residues long: Ribosomal protein L11 methyltransferase (300 aa).

S-adenosyl-L-methionine-binding residues include Thr152, Gly173, Asp195, and Asn234.

The protein belongs to the methyltransferase superfamily. PrmA family.

It localises to the cytoplasm. The enzyme catalyses L-lysyl-[protein] + 3 S-adenosyl-L-methionine = N(6),N(6),N(6)-trimethyl-L-lysyl-[protein] + 3 S-adenosyl-L-homocysteine + 3 H(+). Functionally, methylates ribosomal protein L11. The polypeptide is Ribosomal protein L11 methyltransferase (Burkholderia multivorans (strain ATCC 17616 / 249)).